A 201-amino-acid polypeptide reads, in one-letter code: Recombination protein RecR (201 aa).

Residues 60 to 75 (CSCCGNVDTSDPCTIC) form a C4-type zinc finger. The 96-residue stretch at 83 to 178 (ATLIVVEDVS…RVTRLAHGVP (96 aa)) folds into the Toprim domain.

It belongs to the RecR family.

Functionally, may play a role in DNA repair. It seems to be involved in an RecBC-independent recombinational process of DNA repair. It may act with RecF and RecO. The protein is Recombination protein RecR of Brucella abortus biovar 1 (strain 9-941).